The primary structure comprises 54 residues: Lectin alpha-1 chain (54 aa).

This sequence belongs to the leguminous lectin family. In terms of assembly, tetramer of two alpha and two beta chains.

This is Lectin alpha-1 chain from Lathyrus cicera (Flat-pod pea).